Here is a 562-residue protein sequence, read N- to C-terminus: TBC1 domain family member 24 (562 aa).

A 1,2-diacyl-sn-glycero-3-phospho-(1D-myo-inositol) is bound by residues K36, R40, K238, R242, and 293–297 (RLFSR). Residues 42–259 (GHWAKSHSLR…FFHKVRGGQP (218 aa)) form the Rab-GAP TBC domain. In terms of domain architecture, TLDc spans 337–549 (EIVSVKEMRD…ISIIEVWGFK (213 aa)). Residues 451–464 (ASSGDNDANSSQSA) show a composition bias toward low complexity. Residues 451 to 471 (ASSGDNDANSSQSAKDGIDPS) are disordered.

Interacts with ARF6.

The protein resides in the cell membrane. It localises to the cytoplasm. It is found in the cytoplasmic vesicle membrane. The protein localises to the presynapse. May act as a GTPase-activating protein for Rab family protein(s). Involved in neuronal projections development, probably through a negative modulation of ARF6 function. Involved in the regulation of synaptic vesicle trafficking. This is TBC1 domain family member 24 (tbc1d24) from Xenopus tropicalis (Western clawed frog).